A 106-amino-acid chain; its full sequence is Replication protein A 14 kDa subunit B (106 aa).

Position 1 is an N-acetylmethionine (methionine 1).

This sequence belongs to the replication factor A protein 3 family. In terms of assembly, component of the heterotrimeric canonical replication protein A complex (RPA).

Its subcellular location is the nucleus. Functionally, as part of the replication protein A (RPA/RP-A), a single-stranded DNA-binding heterotrimeric complex, may play an essential role in DNA replication, recombination and repair. Binds and stabilizes single-stranded DNA intermediates, preventing complementary DNA reannealing and recruiting different proteins involved in DNA metabolism. In Arabidopsis thaliana (Mouse-ear cress), this protein is Replication protein A 14 kDa subunit B (RPA3B).